The following is a 220-amino-acid chain: Chaperone protein TorD (220 aa).

This sequence belongs to the TorD/DmsD family. TorD subfamily.

The protein resides in the cytoplasm. Involved in the biogenesis of TorA. Acts on TorA before the insertion of the molybdenum cofactor and, as a result, probably favors a conformation of the apoenzyme that is competent for acquiring the cofactor. This is Chaperone protein TorD from Vibrio cholerae serotype O1 (strain ATCC 39541 / Classical Ogawa 395 / O395).